Consider the following 830-residue polypeptide: Interleukin-4 receptor subunit alpha (830 aa).

Residues 1–32 (MGWLCPGLTFSVSCLILVWAAGSGVTCVSPGG) form the signal peptide. Over 33-240 (VRVLEWPICL…NYYEEPLEQR (208 aa)) the chain is Extracellular. A disulfide bond links C41 and C51. 2 N-linked (GlcNAc...) asparagine glycosylation sites follow: N60 and N78. C82 and C94 are joined by a disulfide. 3 N-linked (GlcNAc...) asparagine glycosylation sites follow: N120, N142, and N170. Residues 133–232 (APRNLMVHAN…WSPSVKWLNY (100 aa)) form the Fibronectin type-III domain. S172 carries the post-translational modification Phosphoserine. Residues N184 and N217 are each glycosylated (N-linked (GlcNAc...) asparagine). A WSXWS motif motif is present at residues 220 to 224 (WSEWS). Residues 241-264 (LPLGVSISCVVILIICLSCYFGII) traverse the membrane as a helical segment. Over 265 to 830 (RIKKEWWDQI…SPGPACMDTS (566 aa)) the chain is Cytoplasmic. Positions 270-278 (WWDQIPNPA) match the Box 1 motif motif. Acidic residues predominate over residues 378 to 387 (ENEEEEEEED). 2 disordered regions span residues 378 to 403 (ENEE…GSFQ) and 450 to 488 (MPWA…SLAS). Positions 444-564 (ENASAPMPWA…ETWEQILRQS (121 aa)) are required for IRS1 activation and IL4-induced cell growth. At Y504 the chain carries Phosphotyrosine. 2 disordered regions span residues 508 to 610 (STFL…EAGY) and 623 to 696 (CPGT…DGQK). The segment covering 518-534 (GELDSDPELAEALEEVE) has biased composition (acidic residues). Pro residues predominate over residues 538–551 (PAAPQPSEPPPTLQ). Residues 564-662 (SVLQRRAAPA…VPTPLFTFGL (99 aa)) are required for IL4-induced gene expression. The segment covering 570 to 582 (AAPAPASGPSSSG) has biased composition (low complexity). A phosphotyrosine mark is found at Y583 and Y610. Over residues 623–635 (CPGTSGLEPSSGE) the composition is skewed to polar residues. The residue at position 638 (Y638) is a Phosphotyrosine. Pro residues-rich tracts occupy residues 646–655 (PGCPETPVPT) and 665–676 (EPPPSPQNPPFP). Residues 716–721 (IVYSAL) carry the ITIM motif motif. Positions 811–830 (SQTPTAVAMLSPGPACMDTS) are disordered.

The protein belongs to the type I cytokine receptor family. Type 4 subfamily. The functional IL4 receptor is formed by initial binding of IL4 to IL4R. Subsequent recruitment to the complex of the common gamma chain, in immune cells, creates a type I receptor and, in non-immune cells, of IL13RA1 forms a type II receptor. IL4R can also interact with the IL13/IL13RA1 complex to form a similar type II receptor. Interacts with PIK3C3. Interacts with the SH2-containing phosphatases, PTPN6/SHIP1, PTPN11/SHIP2 and INPP5D/SHIP. Interacts with JAK1 through a Box 1-containing region; inhibited by SOCS5. Interacts with SOCS5; inhibits IL4 signaling. Interacts with JAK3. Interacts with CLM1. Interacts with IL13RA2. Post-translationally, on IL4 binding, phosphorylated on C-terminal tyrosine residues.

It localises to the membrane. Its function is as follows. Receptor for both interleukin 4 and interleukin 13. Couples to the JAK1/2/3-STAT6 pathway. The IL4 response is involved in promoting Th2 differentiation. The IL4/IL13 responses are involved in regulating IgE production and, chemokine and mucus production at sites of allergic inflammation. In certain cell types, can signal through activation of insulin receptor substrates, IRS1/IRS2. This chain is Interleukin-4 receptor subunit alpha (IL4R), found in Sus scrofa (Pig).